A 262-amino-acid chain; its full sequence is uncharacterized protein (262 aa).

Residues 13-35 traverse the membrane as a helical segment; it reads VVGALLTVVVIVTAAGIIYVISH.

It is found in the membrane. This is an uncharacterized protein from Archaeoglobus fulgidus (strain ATCC 49558 / DSM 4304 / JCM 9628 / NBRC 100126 / VC-16).